The sequence spans 147 residues: Hemoglobin subunit beta (147 aa).

V2 carries the post-translational modification N-acetylvaline. In terms of domain architecture, Globin spans 3-147 (HLTGDEKAAV…VANALAHKYH (145 aa)). T13 is subject to Phosphothreonine. The residue at position 45 (S45) is a Phosphoserine. At K60 the chain carries N6-acetyllysine. Position 64 (H64) interacts with heme b. At K83 the chain carries N6-acetyllysine. H93 is a binding site for heme b. An S-nitrosocysteine modification is found at C94. K145 is subject to N6-acetyllysine.

The protein belongs to the globin family. Heterotetramer of two alpha chains and two beta chains. Red blood cells.

Functionally, involved in oxygen transport from the lung to the various peripheral tissues. The polypeptide is Hemoglobin subunit beta (HBB) (Alouatta belzebul (Red-handed howler monkey)).